The primary structure comprises 135 residues: Large ribosomal subunit protein uL18 (135 aa).

The interval 1–23 (MAQTQADTAARKPVGQSVSATRR) is disordered.

The protein belongs to the universal ribosomal protein uL18 family. As to quaternary structure, part of the 50S ribosomal subunit; part of the 5S rRNA/L5/L18/L25 subcomplex. Contacts the 5S and 23S rRNAs.

Functionally, this is one of the proteins that bind and probably mediate the attachment of the 5S RNA into the large ribosomal subunit, where it forms part of the central protuberance. The protein is Large ribosomal subunit protein uL18 of Mycobacterium marinum (strain ATCC BAA-535 / M).